The primary structure comprises 285 residues: NADPH-dependent 7-cyano-7-deazaguanine reductase (285 aa).

Substrate is bound at residue 80–82 (VES). 82–83 (SK) contributes to the NADPH binding site. Cys191 functions as the Thioimide intermediate in the catalytic mechanism. The active-site Proton donor is Asp198. 231–232 (HE) serves as a coordination point for substrate. 260 to 261 (RG) serves as a coordination point for NADPH.

Belongs to the GTP cyclohydrolase I family. QueF type 2 subfamily. Homodimer.

The protein localises to the cytoplasm. The enzyme catalyses 7-aminomethyl-7-carbaguanine + 2 NADP(+) = 7-cyano-7-deazaguanine + 2 NADPH + 3 H(+). It participates in tRNA modification; tRNA-queuosine biosynthesis. Functionally, catalyzes the NADPH-dependent reduction of 7-cyano-7-deazaguanine (preQ0) to 7-aminomethyl-7-deazaguanine (preQ1). The polypeptide is NADPH-dependent 7-cyano-7-deazaguanine reductase (Psychrobacter arcticus (strain DSM 17307 / VKM B-2377 / 273-4)).